We begin with the raw amino-acid sequence, 630 residues long: MDLTQIQNPSFLKDMSISELEGLSEDIRKFLIEELSQTGGHIAPNLGVVELTIALHKLFDSPQDKFLWDVGHQSYVHKILTGRAKEFGTLRQYQGLCGFPKRCESEHDVWETGHSSTSLSAAMGMALARDLKKTKEYVIPIIGDGALTGGMALEALNHIGHEKTDMIVILNDNEMSIAPNVGALHNVLGRLRTAGKYHWVKDELEYILKKIPAVGGKVAATAEKIKDSLKYLLVSGVFFEELGFTYLGPVDGHDYEKLFETLQYAKKTKGPVLVHVITKKGKGYKPAESDVIGTWHGTGPYKIESGDFVKPKEVAPAWSAVVSETVLKLARADERIVAITPAMPVGSKLEKFQKEFPDRMIDVGIAEQHATTMAAGMATQGMKPFLAIYSTFLQRAYDQVVHDICRQNLNVFIGIDRSGLVGADGETHQGVFDISFLRHLPNMVLMMPKDENEGQHLVYTAMQYEDGPIALRYARGNGLGVHMDEELKAIPIGTWETLKEGTQAAILTFGTTIPMAMEAAERLEKAGVSVKVVNARFIKPMDEAYLHDLLGKNIPILTIEEACLIGGFGTGVVEFASENGYHSALVERMGIPDRFIEHGSVTKLLEEIGLTTDAVVDRIHTMIPSKQKRA.

Residues H72 and 113 to 115 contribute to the thiamine diphosphate site; that span reads GHS. D144 contributes to the Mg(2+) binding site. Thiamine diphosphate-binding positions include 145–146, N173, Y284, and E367; that span reads GA. Residue N173 participates in Mg(2+) binding.

Belongs to the transketolase family. DXPS subfamily. Homodimer. Mg(2+) serves as cofactor. Requires thiamine diphosphate as cofactor.

It carries out the reaction D-glyceraldehyde 3-phosphate + pyruvate + H(+) = 1-deoxy-D-xylulose 5-phosphate + CO2. It functions in the pathway metabolic intermediate biosynthesis; 1-deoxy-D-xylulose 5-phosphate biosynthesis; 1-deoxy-D-xylulose 5-phosphate from D-glyceraldehyde 3-phosphate and pyruvate: step 1/1. Functionally, catalyzes the acyloin condensation reaction between C atoms 2 and 3 of pyruvate and glyceraldehyde 3-phosphate to yield 1-deoxy-D-xylulose-5-phosphate (DXP). In Bacillus cereus (strain B4264), this protein is 1-deoxy-D-xylulose-5-phosphate synthase.